The primary structure comprises 176 residues: MTMCSGARLALLVYGILMHSSVYGSPAASGLRFPGIRPENEVYDEDGNPQQDFYDSESLGVGSPASALRDAYALYYPAEERDVAHGILNKAYRKVLDQPSARRSPADAHGQGLGWDPGGSADDDSEPLSKRHSDGIFTDSYSRYRKQMAVKKYLAAVLGKRYKQRVKNKGRRIPYL.

The N-terminal stretch at 1-24 is a signal peptide; it reads MTMCSGARLALLVYGILMHSSVYG. Positions 25-80 are excised as a propeptide; it reads SPAASGLRFPGIRPENEVYDEDGNPQQDFYDSESLGVGSPASALRDAYALYYPAEE. The tract at residues 98–135 is disordered; that stretch reads QPSARRSPADAHGQGLGWDPGGSADDDSEPLSKRHSDG. Residues 150-158 are important for receptor binding; sequence VKKYLAAVL. A Leucine amide modification is found at Leu158. Residue Lys169 is modified to Lysine amide. Positions 173–176 are excised as a propeptide; sequence IPYL.

It belongs to the glucagon family. In terms of assembly, interacts with ADCYAP1R1 (via N-terminal extracellular domain); both PACAP27 and PACAP38 neuropeptides function as ligand for the ADCYAP1R1 receptor, which modulates the activity of downstream effectors. Interacts with VIPR1 and VIPR2; functions as ligand for VIPR1 and VIPR2 receptors, which modulate the activity of downstream effectors.

It is found in the secreted. In terms of biological role, PACAP is a neuropeptide involved in diverse array of physiological processes through activating the PACAP subfamily of class B1 G protein-coupled receptors: VIP receptor 1 (VIPR1), VIP receptor 2 (VIPR2), and PACAP type I receptor (ADCYAP1R1). Exerts neuroprotective and general cytoprotective effects due to anti-apoptotic, anti-inflammatory, and antioxidant actions. Promotes neuron projection development through the RAPGEF2/Rap1/B-Raf/ERK pathway. In chromaffin cells, induces long-lasting increase of intracellular calcium concentrations and neuroendocrine secretion. Involved in the control of glucose homeostasis, induces insulin secretion by pancreatic beta cells. PACAP exists in two bioactive forms from proteolysis of the same precursor protein, PACAP27 and PACAP38, which differ by eleven amino acid residues in the C-terminus. The polypeptide is Pituitary adenylate cyclase-activating polypeptide (ADCYAP1) (Bos taurus (Bovine)).